Reading from the N-terminus, the 904-residue chain is Protein translocase subunit SecA (904 aa).

ATP-binding positions include glutamine 89, 107 to 111, and aspartate 496; that span reads GEGKT. The disordered stretch occupies residues 870 to 904; sequence GGFQELSSGTPSPTVTVTTSSGGGTERKTSRRRKR. The segment covering 876 to 889 has biased composition (low complexity); that stretch reads SSGTPSPTVTVTTS.

Belongs to the SecA family. As to quaternary structure, monomer and homodimer. Part of the essential Sec protein translocation apparatus which comprises SecA, SecYEG and auxiliary proteins SecDF. Other proteins may also be involved.

The protein localises to the cell inner membrane. It is found in the cytoplasm. It catalyses the reaction ATP + H2O + cellular proteinSide 1 = ADP + phosphate + cellular proteinSide 2.. Its function is as follows. Part of the Sec protein translocase complex. Interacts with the SecYEG preprotein conducting channel. Has a central role in coupling the hydrolysis of ATP to the transfer of proteins into and across the cell membrane, serving as an ATP-driven molecular motor driving the stepwise translocation of polypeptide chains across the membrane. This chain is Protein translocase subunit SecA, found in Leptospira borgpetersenii serovar Hardjo-bovis (strain JB197).